Reading from the N-terminus, the 120-residue chain is Transcription elongation factor SPT4 (120 aa).

The interaction with spt-5 stretch occupies residues 1–39; the sequence is MAASIPSDLRNLRACLLCSLIKSVDAFQTDGCENCDEVL. A C4-type zinc finger spans residues 15-35; sequence CLLCSLIKSVDAFQTDGCENC.

This sequence belongs to the SPT4 family. In terms of assembly, interacts with spt-5 to form DSIF. DSIF interacts with RNA polymerase II and with the positive transcription elongation factor b complex (P-TEFb complex), which is composed of cdk-9 and cyclin-T.

It is found in the nucleus. Functionally, may function as a component of the DRB sensitivity-inducing factor complex (DSIF complex), which regulates transcription elongation by RNA polymerase II. DSIF may enhance transcriptional pausing at sites proximal to the promoter, which may in turn facilitate the assembly of an elongation competent RNA polymerase II complex. The sequence is that of Transcription elongation factor SPT4 (spt-4) from Caenorhabditis briggsae.